The chain runs to 154 residues: Ribonuclease H (154 aa).

Residues 1-142 (MKQVDIFTDG…CDTIARGHAS (142 aa)) enclose the RNase H type-1 domain. 4 residues coordinate Mg(2+): Asp9, Glu47, Asp69, and Asp134.

The protein belongs to the RNase H family. Monomer. Mg(2+) serves as cofactor.

Its subcellular location is the cytoplasm. It catalyses the reaction Endonucleolytic cleavage to 5'-phosphomonoester.. Its function is as follows. Endonuclease that specifically degrades the RNA of RNA-DNA hybrids. This chain is Ribonuclease H, found in Oleidesulfovibrio alaskensis (strain ATCC BAA-1058 / DSM 17464 / G20) (Desulfovibrio alaskensis).